Here is a 390-residue protein sequence, read N- to C-terminus: Chorismate synthase (390 aa).

Residues R40 and R46 each coordinate NADP(+). FMN contacts are provided by residues 128–130 (RAS), 251–252 (QA), G296, 311–315 (KPIPT), and R339.

The protein belongs to the chorismate synthase family. As to quaternary structure, homotetramer. The cofactor is FMNH2.

The catalysed reaction is 5-O-(1-carboxyvinyl)-3-phosphoshikimate = chorismate + phosphate. It functions in the pathway metabolic intermediate biosynthesis; chorismate biosynthesis; chorismate from D-erythrose 4-phosphate and phosphoenolpyruvate: step 7/7. Catalyzes the anti-1,4-elimination of the C-3 phosphate and the C-6 proR hydrogen from 5-enolpyruvylshikimate-3-phosphate (EPSP) to yield chorismate, which is the branch point compound that serves as the starting substrate for the three terminal pathways of aromatic amino acid biosynthesis. This reaction introduces a second double bond into the aromatic ring system. This chain is Chorismate synthase, found in Sulfurihydrogenibium sp. (strain YO3AOP1).